A 338-amino-acid polypeptide reads, in one-letter code: MIRVGINGYGTIGRRVANAVSSQDDMIVVGIVKTKPDYISEVASRRFKIFVPDSSYMKAFQDAGIKVEGTLDNLLDDAEIIVDATPEGMGEKNKPLYIKKKAKAIFEGGEEPDVAETSFNAYSNYNDAIGKSYVRVVSCNTTGLARTLYPIQQAFGVKHVEATLIRRATDQNDSSKGPINAVEPSLKIPSHHAPDLKTVMGNIDVNTVAIKVPTTLMHVHVVQVDTEKNASNDGVLEAWNNYRRIIHVKKDDGIKSTAQIMDLAREFGRDRSDLYEIAIWEGSVSAKANRISYIQAVHQESDVIPENVDAIRAMFNLADKEKSIEKTDKSLGIEKRVY.

NAD(+)-binding positions include 11-12 (TI) and glycine 109. 138-140 (SCN) is a D-glyceraldehyde 3-phosphate binding site. Cysteine 139 (nucleophile) is an active-site residue. Arginine 167 lines the NAD(+) pocket. D-glyceraldehyde 3-phosphate is bound by residues threonine 169 and 192–193 (HA). NAD(+) is bound at residue glutamine 299.

Belongs to the glyceraldehyde-3-phosphate dehydrogenase family. In terms of assembly, homotetramer.

It localises to the cytoplasm. The catalysed reaction is D-glyceraldehyde 3-phosphate + phosphate + NADP(+) = (2R)-3-phospho-glyceroyl phosphate + NADPH + H(+). It carries out the reaction D-glyceraldehyde 3-phosphate + phosphate + NAD(+) = (2R)-3-phospho-glyceroyl phosphate + NADH + H(+). The protein operates within carbohydrate degradation; glycolysis; pyruvate from D-glyceraldehyde 3-phosphate: step 1/5. This Thermoplasma volcanium (strain ATCC 51530 / DSM 4299 / JCM 9571 / NBRC 15438 / GSS1) protein is Glyceraldehyde-3-phosphate dehydrogenase.